Consider the following 154-residue polypeptide: Methylglyoxal synthase (154 aa).

The region spanning 6 to 154 is the MGS-like domain; that stretch reads GALPSRKQIA…AYIAERTKKL (149 aa). Residues histidine 19, lysine 23, 45 to 48, and 65 to 66 contribute to the substrate site; these read TGTT and SG. Aspartate 71 (proton donor/acceptor) is an active-site residue. A substrate-binding site is contributed by histidine 98.

Belongs to the methylglyoxal synthase family.

It carries out the reaction dihydroxyacetone phosphate = methylglyoxal + phosphate. Its function is as follows. Catalyzes the formation of methylglyoxal from dihydroxyacetone phosphate. The polypeptide is Methylglyoxal synthase (Saccharophagus degradans (strain 2-40 / ATCC 43961 / DSM 17024)).